Reading from the N-terminus, the 199-residue chain is dITP/XTP pyrophosphatase (199 aa).

Residue 8-13 (TSNINK) participates in substrate binding. Catalysis depends on D68, which acts as the Proton acceptor. D68 contacts Mg(2+). Residues S69, 155 to 158 (FGYN), K177, and 182 to 183 (HR) each bind substrate.

This sequence belongs to the HAM1 NTPase family. Homodimer. Mg(2+) is required as a cofactor.

It catalyses the reaction XTP + H2O = XMP + diphosphate + H(+). The enzyme catalyses dITP + H2O = dIMP + diphosphate + H(+). It carries out the reaction ITP + H2O = IMP + diphosphate + H(+). In terms of biological role, pyrophosphatase that catalyzes the hydrolysis of nucleoside triphosphates to their monophosphate derivatives, with a high preference for the non-canonical purine nucleotides XTP (xanthosine triphosphate), dITP (deoxyinosine triphosphate) and ITP. Seems to function as a house-cleaning enzyme that removes non-canonical purine nucleotides from the nucleotide pool, thus preventing their incorporation into DNA/RNA and avoiding chromosomal lesions. This chain is dITP/XTP pyrophosphatase, found in Borrelia recurrentis (strain A1).